The chain runs to 459 residues: Ribulose bisphosphate carboxylase large chain (459 aa).

Lys-4 carries the post-translational modification N6,N6,N6-trimethyllysine. Substrate contacts are provided by Asn-113 and Thr-163. The active-site Proton acceptor is the Lys-165. Lys-167 contributes to the substrate binding site. The Mg(2+) site is built by Lys-191, Asp-193, and Glu-194. Lys-191 carries the post-translational modification N6-carboxylysine. Residue His-284 is the Proton acceptor of the active site. Substrate-binding residues include Arg-285, His-317, and Ser-369.

Belongs to the RuBisCO large chain family. Type I subfamily. Heterohexadecamer of 8 large chains and 8 small chains; disulfide-linked. The disulfide link is formed within the large subunit homodimers. The cofactor is Mg(2+). The disulfide bond which can form in the large chain dimeric partners within the hexadecamer appears to be associated with oxidative stress and protein turnover.

It is found in the plastid. It localises to the chloroplast. The enzyme catalyses 2 (2R)-3-phosphoglycerate + 2 H(+) = D-ribulose 1,5-bisphosphate + CO2 + H2O. The catalysed reaction is D-ribulose 1,5-bisphosphate + O2 = 2-phosphoglycolate + (2R)-3-phosphoglycerate + 2 H(+). Its function is as follows. RuBisCO catalyzes two reactions: the carboxylation of D-ribulose 1,5-bisphosphate, the primary event in carbon dioxide fixation, as well as the oxidative fragmentation of the pentose substrate in the photorespiration process. Both reactions occur simultaneously and in competition at the same active site. The protein is Ribulose bisphosphate carboxylase large chain of Garrya elliptica (Wavyleaf silktassel).